The following is a 23-amino-acid chain: Fimbrial protein (23 aa).

Cys8 and Cys21 are oxidised to a cystine.

Belongs to the N-Me-Phe pilin family. As to quaternary structure, the pili are polar flexible filaments of about 5.4 nanometers diameter and 2.5 micrometers average length; they consist of only a single polypeptide chain arranged in a helical configuration of five subunits per turn in the assembled pilus.

Its subcellular location is the fimbrium. The protein is Fimbrial protein (pil) of Pseudomonas aeruginosa.